A 363-amino-acid chain; its full sequence is Protein RecA (363 aa).

79 to 86 (GPESSGKT) provides a ligand contact to ATP.

This sequence belongs to the RecA family.

The protein localises to the cytoplasm. In terms of biological role, can catalyze the hydrolysis of ATP in the presence of single-stranded DNA, the ATP-dependent uptake of single-stranded DNA by duplex DNA, and the ATP-dependent hybridization of homologous single-stranded DNAs. It interacts with LexA causing its activation and leading to its autocatalytic cleavage. The protein is Protein RecA of Methylobacterium sp. (strain 4-46).